We begin with the raw amino-acid sequence, 297 residues long: Trimeric intracellular cation channel type A (297 aa).

At 1–18 (MDLISSLSLGELALSFSR) the chain is on the lumenal side. The helical transmembrane segment at 19-39 (VPLFPVFDLSYFIVSIIYLKY) threads the bilayer. The Cytoplasmic portion of the chain corresponds to 40–51 (EPGSVELSRRHP). Residues 52 to 72 (VASWLCAMLHCFGSYILADLL) traverse the membrane as a helical segment. Over 73–85 (LGEPIIDYFSNSS) the chain is Lumenal. Ca(2+) is bound at residue Gly-74. Residues 86-106 (SILLASGVWYLIFFCPLDLFY) form a helical membrane-spanning segment. Residues 107 to 143 (KCVCFLPVKLIFVAMKEVVRVRKIAVGIHHAHHYHHG) are Cytoplasmic-facing. A 1,2-diacyl-sn-glycero-3-phospho-(1D-myo-inositol-4,5-bisphosphate)-binding residues include Lys-122 and Arg-126. A helical membrane pass occupies residues 144-164 (WFIMIATGWVKGSGVALLSNL). At 165–177 (EQLLRGVWKPETN) the chain is on the lumenal side. Residues 178–198 (EILHMSFPTKASLYGAILFTL) traverse the membrane as a helical segment. Residues 199 to 208 (QQTRWLPVSK) lie on the Cytoplasmic side of the membrane. Residues 209 to 229 (ASLIFVFTMFMVSCKVFLTAT) traverse the membrane as a helical segment. Over 230-233 (HSHS) the chain is Lumenal. The helical transmembrane segment at 234–254 (SPFDVLEGYICPVLFGATWGG) threads the bilayer. Topologically, residues 255–297 (DHHHDNHGAPHGMGLGTQHSGLPAKAKEELSEGFRKKKTKKAD) are cytoplasmic. The segment at 259 to 297 (DNHGAPHGMGLGTQHSGLPAKAKEELSEGFRKKKTKKAD) is disordered. Residues 279–288 (KAKEELSEGF) show a composition bias toward basic and acidic residues.

This sequence belongs to the TMEM38 family. As to quaternary structure, homotrimer; conformation seems to be controled by binding to diacylglycerol (DAG).

Its subcellular location is the sarcoplasmic reticulum membrane. It localises to the nucleus membrane. The enzyme catalyses K(+)(in) = K(+)(out). Its activity is regulated as follows. Channel activity is activated by a change of voltage within the sarcoplasmic reticulum lumen and blocked by luminal high Ca(2+) levels. Its function is as follows. Intracellular monovalent cation channel required for maintenance of rapid intracellular calcium release. Acts as a potassium counter-ion channel that functions in synchronization with calcium release from intracellular stores. Opened by a change of voltage within the sarcoplasmic reticulum lumen. This is Trimeric intracellular cation channel type A from Rattus norvegicus (Rat).